The primary structure comprises 394 residues: Elongation factor Tu (394 aa).

One can recognise a tr-type G domain in the interval 10–204 (KPHINIGTIG…AVDDNIPTPE (195 aa)). The tract at residues 19–26 (GHVDHGKT) is G1. 19–26 (GHVDHGKT) contacts GTP. Thr-26 serves as a coordination point for Mg(2+). The tract at residues 60-64 (GITIN) is G2. Residues 81–84 (DCPG) form a G3 region. GTP-binding positions include 81-85 (DCPGH) and 136-139 (NKID). Residues 136-139 (NKID) form a G4 region. The G5 stretch occupies residues 174–176 (SAL).

Belongs to the TRAFAC class translation factor GTPase superfamily. Classic translation factor GTPase family. EF-Tu/EF-1A subfamily. Monomer.

The protein localises to the cytoplasm. It catalyses the reaction GTP + H2O = GDP + phosphate + H(+). Functionally, GTP hydrolase that promotes the GTP-dependent binding of aminoacyl-tRNA to the A-site of ribosomes during protein biosynthesis. The polypeptide is Elongation factor Tu (Chlamydia trachomatis serovar L2 (strain ATCC VR-902B / DSM 19102 / 434/Bu)).